A 223-amino-acid chain; its full sequence is ATP-dependent Clp protease proteolytic subunit 2 (223 aa).

The disordered stretch occupies residues 1-40 (MHAGSGNDMDITRMTPTRLDDEPDAPEPETREDDNKTLNS). Over residues 21–32 (DEPDAPEPETRE) the composition is skewed to acidic residues. The Nucleophile role is filled by serine 124. Histidine 149 is a catalytic residue.

This sequence belongs to the peptidase S14 family. As to quaternary structure, fourteen ClpP subunits assemble into 2 heptameric rings which stack back to back to give a disk-like structure with a central cavity, resembling the structure of eukaryotic proteasomes.

The protein resides in the cytoplasm. The enzyme catalyses Hydrolysis of proteins to small peptides in the presence of ATP and magnesium. alpha-casein is the usual test substrate. In the absence of ATP, only oligopeptides shorter than five residues are hydrolyzed (such as succinyl-Leu-Tyr-|-NHMec, and Leu-Tyr-Leu-|-Tyr-Trp, in which cleavage of the -Tyr-|-Leu- and -Tyr-|-Trp bonds also occurs).. Its function is as follows. Cleaves peptides in various proteins in a process that requires ATP hydrolysis. Has a chymotrypsin-like activity. Plays a major role in the degradation of misfolded proteins. In Gluconobacter oxydans (strain 621H) (Gluconobacter suboxydans), this protein is ATP-dependent Clp protease proteolytic subunit 2.